A 799-amino-acid chain; its full sequence is Oligopeptide transporter 1 (799 aa).

2 disordered regions span residues 1 to 26 and 43 to 64; these read MSTI…PIQI and DVNN…QKFD. At 1-108 the chain is on the extracellular side; that stretch reads MSTIYRESDS…DPTIRLNHWR (108 aa). Residues 13 to 26 are compositionally biased toward low complexity; the sequence is SEPSPTPTTIPIQI. N46 carries N-linked (GlcNAc...) asparagine glycosylation. Phosphothreonine occurs at positions 48, 50, and 51. A helical membrane pass occupies residues 109–129; it reads TWFLTTVFVVVFAGVNQFFSL. Residues 130 to 135 are Cytoplasmic-facing; sequence RYPSLE. Residues 136-156 traverse the membrane as a helical segment; the sequence is INFLVAQVVCYPIGRILALLP. At 157–177 the chain is on the extracellular side; it reads DWKCSKVPFFDLNPGPFTKKE. Residues 178 to 198 traverse the membrane as a helical segment; it reads HAVVTIAVALTSSTAYAMYIL. At 199-210 the chain is on the cytoplasmic side; the sequence is NAQGSFYNMKLN. Residues 211–231 form a helical membrane-spanning segment; it reads VGYQFLLVWTSQMIGYGAAGL. The Extracellular portion of the chain corresponds to 232-276; the sequence is TRRWVVNPASSIWPQTLISVSLFDSLHSRKVEKTVANGWTMPRYR. Residues 277–297 form a helical membrane-spanning segment; the sequence is FFLIVLIGSFIWYWVPGFLFT. Residues 298-313 lie on the Cytoplasmic side of the membrane; sequence GLSYFNVILWGSKTRH. The helical transmembrane segment at 314–334 threads the bilayer; it reads NFIANTIFGTQSGLGALPITF. Topologically, residues 335-359 are extracellular; it reads DYTQVSQAMSGSVFATPFYVSANTY. A helical transmembrane segment spans residues 360 to 380; that stretch reads ASVLIFFVIVLPCLYFTNTWY. The Cytoplasmic segment spans residues 381 to 428; it reads AKYMPVISGSTYDNTQNKYNVTKILNEDYSINLEKYKEYSPVFVPFSY. The helical transmembrane segment at 429–449 threads the bilayer; the sequence is LLSYALNFAAVIAVFVHCILY. Residues 450–482 lie on the Extracellular side of the membrane; the sequence is HGKDIVAKFKDRKNGGTDIHMRIYSKNYKDCPD. The helical transmembrane segment at 483 to 503 threads the bilayer; sequence WWYLLLQIVMIGLGFVAVCCF. Residues 504–508 are Cytoplasmic-facing; the sequence is DTKFP. The chain crosses the membrane as a helical span at residues 509–529; sequence AWAFVIAILISLVNFIPQGIL. At 530–540 the chain is on the extracellular side; that stretch reads EAMTNQHVGLN. Residues 541–561 form a helical membrane-spanning segment; it reads IITELICGYMLPLRPMANLLF. Residues 562 to 590 lie on the Cytoplasmic side of the membrane; it reads KLYGFIVMRQGLNLSRDLKLAMYMKVSPR. A helical transmembrane segment spans residues 591 to 611; sequence LIFAVQIYATIISGMVNVGVQ. Over 612–659 the chain is Extracellular; that stretch reads EWMMHNIDGLCTTDQPNGFTCANGRTVFNASIIWSLPKYLFSSGRIYN. N640 carries N-linked (GlcNAc...) asparagine glycosylation. A helical transmembrane segment spans residues 660 to 680; the sequence is PLMWFFLIGLLFPLAVYAVQW. The Cytoplasmic segment spans residues 681–736; it reads KFPKFKFAKHIHTPVFFTGPGNIPPSTPYNYSLFFAMSFCLNLIRKRWRAWFNKYN. Residues 737–757 form a helical membrane-spanning segment; sequence FVMGAGVEAGVAISVVIIFLC. Residues 758–799 are Extracellular-facing; that stretch reads VQYPGGKLSWWGNNVWKRTYDNDYKKFYTLKKGETFGYDKWW.

This sequence belongs to the oligopeptide OPT transporter family.

The protein resides in the cell membrane. In terms of biological role, high affinity transporter for glutathione. Also transports tetra- and pentapeptides like the opioids leucine enkephalin (Tyr-Gly-Gly-Phe-Leu) and methionine enkephalin (Tyr-Gly-Gly_Phe-Met) across the cell membrane. The sequence is that of Oligopeptide transporter 1 (OPT1) from Saccharomyces cerevisiae (strain ATCC 204508 / S288c) (Baker's yeast).